The primary structure comprises 86 residues: uncharacterized protein (86 aa).

TPR repeat units lie at residues alanine 8–tyrosine 41 and arginine 42–leucine 75.

This is an uncharacterized protein from Methanocaldococcus jannaschii (strain ATCC 43067 / DSM 2661 / JAL-1 / JCM 10045 / NBRC 100440) (Methanococcus jannaschii).